A 384-amino-acid chain; its full sequence is Spermidine/putrescine import ATP-binding protein PotA (384 aa).

The ABC transporter domain occupies 6–238; sequence ITFNNVSKTF…PINHFVANFI (233 aa). Residue 40–47 coordinates ATP; sequence GASGSGKS.

It belongs to the ABC transporter superfamily. Spermidine/putrescine importer (TC 3.A.1.11.1) family. As to quaternary structure, the complex is composed of two ATP-binding proteins (PotA), two transmembrane proteins (PotB and PotC) and a solute-binding protein (PotD).

It is found in the cell membrane. The catalysed reaction is ATP + H2O + polyamine-[polyamine-binding protein]Side 1 = ADP + phosphate + polyamineSide 2 + [polyamine-binding protein]Side 1.. Part of the ABC transporter complex PotABCD involved in spermidine/putrescine import. Responsible for energy coupling to the transport system. The protein is Spermidine/putrescine import ATP-binding protein PotA of Streptococcus pyogenes serotype M6 (strain ATCC BAA-946 / MGAS10394).